The following is a 634-amino-acid chain: Nucleoside triphosphatase I (634 aa).

In terms of domain architecture, Helicase ATP-binding spans 41 to 203; the sequence is FLGLDSMNSL…ALLVNLLRPG (163 aa). Residue 54–61 coordinates ATP; the sequence is QETGVGKT. The short motif at 140-143 is the DEXH box element; that stretch reads DECH. A Helicase C-terminal domain is found at 355–531; it reads SLYQALYEHS…EFSQLYRVLK (177 aa). Positions 456–523 are binding to the cap-specific mRNA (nucleoside-2'-O-)-methyltransferase; sequence DIFILDMTWN…EIIQNKAREF (68 aa).

It belongs to the helicase family. NPH I subfamily. As to quaternary structure, monomer. Interacts (via C-terminus) with RAP94 (via N-terminus). Interacts with the cap-specific mRNA (nucleoside-2'-O-)-methyltransferase.

It localises to the virion. The catalysed reaction is a ribonucleoside 5'-triphosphate + H2O = a ribonucleoside 5'-diphosphate + phosphate + H(+). In terms of biological role, DNA-dependent ATPase required for providing the needed energy to achieve the termination of early transcripts. Acts in concert with the RAP94 subunit of the virion RNA polymerase and the capping enzyme/VTF to catalyze release of UUUUUNU-containing nascent RNA from the elongation complex. NPH-I must bind ssDNA in order to exhibit ATPase activity. This Homo sapiens (Human) protein is Nucleoside triphosphatase I (NPH1).